A 159-amino-acid chain; its full sequence is 18.0 kDa class I heat shock protein (159 aa).

The 115-residue stretch at 45–159 (ETAAFANTHI…PEVKSIHISG (115 aa)) folds into the sHSP domain.

This sequence belongs to the small heat shock protein (HSP20) family. Forms oligomeric structures.

It localises to the cytoplasm. In Daucus carota (Wild carrot), this protein is 18.0 kDa class I heat shock protein.